Consider the following 217-residue polypeptide: 3,4-dihydroxy-2-butanone 4-phosphate synthase (217 aa).

D-ribulose 5-phosphate-binding positions include 37-38 (RE), Asp-42, 150-154 (RRGHT), and Glu-174. Residue Glu-38 coordinates Mg(2+). His-153 lines the Mg(2+) pocket.

This sequence belongs to the DHBP synthase family. In terms of assembly, homodimer. The cofactor is Mg(2+). Requires Mn(2+) as cofactor.

It catalyses the reaction D-ribulose 5-phosphate = (2S)-2-hydroxy-3-oxobutyl phosphate + formate + H(+). The protein operates within cofactor biosynthesis; riboflavin biosynthesis; 2-hydroxy-3-oxobutyl phosphate from D-ribulose 5-phosphate: step 1/1. Its function is as follows. Catalyzes the conversion of D-ribulose 5-phosphate to formate and 3,4-dihydroxy-2-butanone 4-phosphate. The chain is 3,4-dihydroxy-2-butanone 4-phosphate synthase from Shewanella sp. (strain MR-4).